The primary structure comprises 240 residues: Uridylate kinase (240 aa).

K12 to G15 is an ATP binding site. The involved in allosteric activation by GTP stretch occupies residues G20 to G25. Position 54 (G54) interacts with UMP. ATP contacts are provided by G55 and R59. Residues D74 and T135 to T142 each bind UMP. The ATP site is built by Y168 and D171.

This sequence belongs to the UMP kinase family. As to quaternary structure, homohexamer.

Its subcellular location is the cytoplasm. The catalysed reaction is UMP + ATP = UDP + ADP. It participates in pyrimidine metabolism; CTP biosynthesis via de novo pathway; UDP from UMP (UMPK route): step 1/1. Its activity is regulated as follows. Allosterically activated by GTP. Inhibited by UTP. Functionally, catalyzes the reversible phosphorylation of UMP to UDP. This chain is Uridylate kinase, found in Desulfitobacterium hafniense (strain Y51).